Here is a 99-residue protein sequence, read N- to C-terminus: MMMNAFFPAMALIVLVGCSTPPPVQKAQRVKGDPLRSLNMEALCKDQAGKRYNTGEQKIDVTAFEQFQGSYEMRGYTFRKEQFVCSFDADGHFLHLSMR.

An N-terminal signal peptide occupies residues 1-17 (MMMNAFFPAMALIVLVG). A lipid anchor (N-palmitoyl cysteine) is attached at Cys18. A lipid anchor (S-diacylglycerol cysteine) is attached at Cys18.

The protein resides in the cell membrane. This is an uncharacterized protein from Escherichia coli O6:H1 (strain CFT073 / ATCC 700928 / UPEC).